The following is a 639-amino-acid chain: Nitrous-oxide reductase (639 aa).

The tat-type signal signal peptide spans 1–54 (MSDKKDQVPGAVEAPRGVSRRSFLGTGAVTGAVLAGATALGAGTFTRESWAAAA). 3 residues coordinate Cu cation: H130, H131, and H179. 5 residues coordinate Ca(2+): Y257, E260, M268, D274, and N325. Cu cation is bound by residues H327, H383, and H434. The Ca(2+) site is built by K455 and E470. Positions 495, 584, 619, 621, 623, 627, and 630 each coordinate Cu cation. The COX2-like stretch occupies residues 543–639 (NKVRVYMTSM…MVGRMLVEKA (97 aa)).

Belongs to the NosZ family. The protein in the C-terminal section; belongs to the cytochrome c oxidase subunit 2 family. As to quaternary structure, homodimer. Ca(2+) is required as a cofactor. The cofactor is Cu cation. Post-translationally, predicted to be exported by the Tat system. The position of the signal peptide cleavage has not been experimentally proven.

Its subcellular location is the periplasm. The catalysed reaction is N2 + 2 Fe(III)-[cytochrome c] + H2O = nitrous oxide + 2 Fe(II)-[cytochrome c] + 2 H(+). The protein operates within nitrogen metabolism; nitrate reduction (denitrification); dinitrogen from nitrate: step 4/4. Nitrous-oxide reductase is part of a bacterial respiratory system which is activated under anaerobic conditions in the presence of nitrate or nitrous oxide. The chain is Nitrous-oxide reductase (nosZ) from Pseudomonas fluorescens.